Here is a 285-residue protein sequence, read N- to C-terminus: Protoheme IX farnesyltransferase (285 aa).

The next 8 helical transmembrane spans lie at 19-39 (RIIW…GKLM), 40-60 (PLSI…SMII), 90-110 (AIYV…LDNP), 111-131 (LTSF…TVWL), 135-155 (SPLN…AGYA), 165-185 (SILL…ALAL), 220-240 (IPFA…VAGI), and 265-285 (FKFS…TRLI).

It belongs to the UbiA prenyltransferase family. Protoheme IX farnesyltransferase subfamily.

It is found in the cell membrane. It catalyses the reaction heme b + (2E,6E)-farnesyl diphosphate + H2O = Fe(II)-heme o + diphosphate. It participates in porphyrin-containing compound metabolism; heme O biosynthesis; heme O from protoheme: step 1/1. In terms of biological role, converts heme B (protoheme IX) to heme O by substitution of the vinyl group on carbon 2 of heme B porphyrin ring with a hydroxyethyl farnesyl side group. This chain is Protoheme IX farnesyltransferase, found in Metallosphaera sedula (strain ATCC 51363 / DSM 5348 / JCM 9185 / NBRC 15509 / TH2).